Reading from the N-terminus, the 443-residue chain is COP9 signalosome complex subunit 2 (443 aa).

The segment at 1–275 (MSDMEDDFMC…DESGSPRRTT (275 aa)) is mediates interaction with NIF3L1. Residues 254-416 (AHTDFFEAFK…QLLELDHQKR (163 aa)) form the PCI domain.

Belongs to the CSN2 family. In terms of assembly, component of the CSN complex, composed of COPS1/GPS1, COPS2, COPS3, COPS4, COPS5, COPS6, COPS7 (COPS7A or COPS7B), COPS8 and COPS9 isoform 1. In the complex, it probably interacts directly with COPS1, COPS4, COPS5, COPS6 and COPS7 (COPS7A or COPS7B). Specifically interacts with the ligand binding domain of the thyroid receptor (TR). Does not require the presence of thyroid hormone for its interaction. Interacts with CUL1 and CUL2. Interacts with IRF8/ICSBP1 and with nuclear receptors NR2F1 and NR0B1. Interacts with NIF3L1. Post-translationally, phosphorylated by CK2 and PKD kinases.

The protein localises to the cytoplasm. It localises to the nucleus. Functionally, essential component of the COP9 signalosome complex (CSN), a complex involved in various cellular and developmental processes. The CSN complex is an essential regulator of the ubiquitin (Ubl) conjugation pathway by mediating the deneddylation of the cullin subunits of SCF-type E3 ligase complexes, leading to decrease the Ubl ligase activity of SCF-type complexes such as SCF, CSA or DDB2. The complex is also involved in phosphorylation of p53/TP53, c-jun/JUN, IkappaBalpha/NFKBIA, ITPK1 and IRF8/ICSBP, possibly via its association with CK2 and PKD kinases. CSN-dependent phosphorylation of TP53 and JUN promotes and protects degradation by the Ubl system, respectively. Involved in early stage of neuronal differentiation via its interaction with NIF3L1. The chain is COP9 signalosome complex subunit 2 (COPS2) from Homo sapiens (Human).